Reading from the N-terminus, the 243-residue chain is Proteasome subunit beta (243 aa).

A propeptide spans 1–49 (MRTPTGDLSDGPAEELGRDQPVFGPEIGEFEHSERRAAQADGEGEMKTG) (removed in mature form; by autocatalysis). Residues 1–50 (MRTPTGDLSDGPAEELGRDQPVFGPEIGEFEHSERRAAQADGEGEMKTGT) are disordered. Residues 29–38 (EFEHSERRAA) are compositionally biased toward basic and acidic residues. Catalysis depends on Thr-50, which acts as the Nucleophile.

It belongs to the peptidase T1B family. In terms of assembly, the 20S proteasome core is composed of 14 alpha and 14 beta subunits that assemble into four stacked heptameric rings, resulting in a barrel-shaped structure. The two inner rings, each composed of seven catalytic beta subunits, are sandwiched by two outer rings, each composed of seven alpha subunits. The catalytic chamber with the active sites is on the inside of the barrel. Has a gated structure, the ends of the cylinder being occluded by the N-termini of the alpha-subunits. Is capped at one or both ends by the proteasome regulatory ATPase, PAN.

Its subcellular location is the cytoplasm. The enzyme catalyses Cleavage of peptide bonds with very broad specificity.. With respect to regulation, the formation of the proteasomal ATPase PAN-20S proteasome complex, via the docking of the C-termini of PAN into the intersubunit pockets in the alpha-rings, triggers opening of the gate for substrate entry. Interconversion between the open-gate and close-gate conformations leads to a dynamic regulation of the 20S proteasome proteolysis activity. In terms of biological role, component of the proteasome core, a large protease complex with broad specificity involved in protein degradation. This chain is Proteasome subunit beta, found in Halorubrum lacusprofundi (strain ATCC 49239 / DSM 5036 / JCM 8891 / ACAM 34).